Reading from the N-terminus, the 22-residue chain is FVPIFTHSELQKIREKERNKGQ.

Residues 1 to 22 (FVPIFTHSELQKIREKERNKGQ) form a disordered region. Residues 9-22 (ELQKIREKERNKGQ) are compositionally biased toward basic and acidic residues.

Belongs to the motilin family.

The protein resides in the secreted. Functionally, plays an important role in the regulation of interdigestive gastrointestinal motility and indirectly causes rhythmic contraction of duodenal and colonic smooth muscle. This chain is Motilin (MLN), found in Canis lupus familiaris (Dog).